The following is a 118-amino-acid chain: Ribonuclease P protein component (118 aa).

This sequence belongs to the RnpA family. Consists of a catalytic RNA component (M1 or rnpB) and a protein subunit.

It carries out the reaction Endonucleolytic cleavage of RNA, removing 5'-extranucleotides from tRNA precursor.. Functionally, RNaseP catalyzes the removal of the 5'-leader sequence from pre-tRNA to produce the mature 5'-terminus. It can also cleave other RNA substrates such as 4.5S RNA. The protein component plays an auxiliary but essential role in vivo by binding to the 5'-leader sequence and broadening the substrate specificity of the ribozyme. In Mycobacterium sp. (strain KMS), this protein is Ribonuclease P protein component.